Here is a 327-residue protein sequence, read N- to C-terminus: Tagatose 1,6-diphosphate aldolase 2 (327 aa).

It belongs to the aldolase LacD family.

It catalyses the reaction D-tagatofuranose 1,6-bisphosphate = D-glyceraldehyde 3-phosphate + dihydroxyacetone phosphate. It participates in carbohydrate metabolism; D-tagatose 6-phosphate degradation; D-glyceraldehyde 3-phosphate and glycerone phosphate from D-tagatose 6-phosphate: step 2/2. The chain is Tagatose 1,6-diphosphate aldolase 2 (lacD2) from Streptococcus pyogenes serotype M3 (strain ATCC BAA-595 / MGAS315).